The sequence spans 319 residues: MATH domain and coiled-coil domain-containing protein At3g58200 (319 aa).

Residues 6–132 (DNKFRWVIKN…NEEVKIVVEV (127 aa)) form the MATH domain. Residues 255 to 302 (FKVDWLEKKLEEVKEKKKEEQIGETRMQEMKVFKQKCSDIEALMEREK) adopt a coiled-coil conformation.

The protein is MATH domain and coiled-coil domain-containing protein At3g58200 of Arabidopsis thaliana (Mouse-ear cress).